We begin with the raw amino-acid sequence, 817 residues long: Protein hunchback (817 aa).

Disordered regions lie at residues 51 to 77, 93 to 132, and 187 to 252; these read PGTI…HSPL, HNGG…TSSA, and YSQQ…EDQD. Residues 62–76 show a composition bias toward low complexity; sequence QQHSSMMASQPQHSP. A compositionally biased stretch (polar residues) spans 103–119; that stretch reads FSDNSGAMTPSPNTNVG. A compositionally biased stretch (low complexity) spans 189 to 201; sequence QQQQQQQQRQLQQ. C2H2-type zinc fingers lie at residues 287–309, 316–338, 344–366, and 372–396; these read HKCK…ARTH, LQCP…IRKH, FQCD…RKSH, and YRCA…KYEH. Disordered regions lie at residues 456 to 477, 491 to 513, 564 to 619, and 666 to 758; these read PLQQ…SSVA, QNLA…SSQQ, QLQQ…QQTP, and APTS…AGNS. Low complexity predominate over residues 564-576; it reads QLQQQQQNKQANE. Acidic residues predominate over residues 577-595; sequence NGEEDEEDNDEVDEDEEEF. The segment covering 680–694 has biased composition (polar residues); the sequence is MPPTTSSPIHPSQVN. Residues 721-758 are compositionally biased toward low complexity; it reads PTTANTSASSTASSSGNSSNSSSTSTSSNSNSSSAGNS. 2 consecutive C2H2-type zinc fingers follow at residues 764-786 and 792-816; these read YECK…MGYH and FKCN…RNAH.

Belongs to the hunchback C2H2-type zinc-finger protein family.

The protein localises to the nucleus. In terms of biological role, gap class segmentation protein that controls development of head structures. This is Protein hunchback (hb) from Musca domestica (House fly).